A 617-amino-acid polypeptide reads, in one-letter code: Dihydroxy-acid dehydratase (617 aa).

Asp81 is a Mg(2+) binding site. Cys122 lines the [2Fe-2S] cluster pocket. Positions 123 and 124 each coordinate Mg(2+). An N6-carboxylysine modification is found at Lys124. A [2Fe-2S] cluster-binding site is contributed by Cys195. Residue Glu490 participates in Mg(2+) binding. The active-site Proton acceptor is the Ser516.

The protein belongs to the IlvD/Edd family. In terms of assembly, homodimer. [2Fe-2S] cluster serves as cofactor. Requires Mg(2+) as cofactor.

It catalyses the reaction (2R)-2,3-dihydroxy-3-methylbutanoate = 3-methyl-2-oxobutanoate + H2O. It carries out the reaction (2R,3R)-2,3-dihydroxy-3-methylpentanoate = (S)-3-methyl-2-oxopentanoate + H2O. Its pathway is amino-acid biosynthesis; L-isoleucine biosynthesis; L-isoleucine from 2-oxobutanoate: step 3/4. It participates in amino-acid biosynthesis; L-valine biosynthesis; L-valine from pyruvate: step 3/4. Functionally, functions in the biosynthesis of branched-chain amino acids. Catalyzes the dehydration of (2R,3R)-2,3-dihydroxy-3-methylpentanoate (2,3-dihydroxy-3-methylvalerate) into 2-oxo-3-methylpentanoate (2-oxo-3-methylvalerate) and of (2R)-2,3-dihydroxy-3-methylbutanoate (2,3-dihydroxyisovalerate) into 2-oxo-3-methylbutanoate (2-oxoisovalerate), the penultimate precursor to L-isoleucine and L-valine, respectively. The sequence is that of Dihydroxy-acid dehydratase from Acidiphilium cryptum (strain JF-5).